The chain runs to 486 residues: MWKSVVGHDVSVSVETQGDDWDTDPDFVNDISEKEQRWGAKTIEGSGRTEHINIHQLRNKVSEEHDILKKKELESGPKASHGYGGRFGVERDRMDKSAVGHEYVADVEKHSSQTDAARGFGGKYGVERDRADKSAVGFDYKGEVEKHASQKDYSHGFGGRYGVEKDKRDKAALGYDYKGETEKHESQRDYAKGFGGQYGIQKDRVDKSAVGFNEMEAPTTAYKKTTPIEAASSGARGLKAKFESLAEEKRKREEEEKAQQMARQQQERKAVVKMSREVQQPSMPVEEPAAPAQLPKKISSEVWPPAESHLPPESQPVRSRREYPVPSLPTRQSPLQNHLEDNEEPPALPPRTPEGLQVVEEPVYEAAPELEPEPEPDYEPEPETEPDYEDVGELDRQDEDAEGDYEDVLEPEDTPSLSYQAGPSAGAGGAGISAIALYDYQGEGSDELSFDPDDIITDIEMVDEGWWRGQCRGHFGLFPANYVKLL.

An involved in HAX-1 binding region spans residues 27-66 (FVNDISEKEQRWGAKTIEGSGRTEHINIHQLRNKVSEEHD). Lys41 bears the N6-acetyllysine mark. Cortactin repeat units lie at residues 79–115 (ASHG…SQTD), 116–152 (AARG…SQKD), and 153–189 (YSHG…SQRD). Lys123 is modified (N6-acetyllysine). The residue at position 140 (Tyr140) is a Phosphotyrosine. A Cortactin 4; truncated repeat occupies 190–212 (YAKGFGGQYGIQKDRVDKSAVGF). An N6-acetyllysine modification is found at Lys192. Tyr198 is subject to Phosphotyrosine. Tyr222 bears the Phosphotyrosine; by FGR mark. A disordered region spans residues 226 to 430 (TPIEAASSGA…AGPSAGAGGA (205 aa)). 2 stretches are compositionally biased toward basic and acidic residues: residues 240-258 (AKFE…EEKA) and 265-276 (QQERKAVVKMSR). Lys241 carries the post-translational modification N6-acetyllysine. Phosphoserine is present on Ser275. A Phosphothreonine modification is found at Thr330. At Ser333 the chain carries Phosphoserine. A compositionally biased stretch (low complexity) spans 358–367 (VVEEPVYEAA). Acidic residues predominate over residues 368 to 413 (PELEPEPEPDYEPEPETEPDYEDVGELDRQDEDAEGDYEDVLEPED). A phosphotyrosine; by SYK and FES mark is found at Tyr388 and Tyr405. Positions 429–486 (GAGISAIALYDYQGEGSDELSFDPDDIITDIEMVDEGWWRGQCRGHFGLFPANYVKLL) constitute an SH3 domain.

Interacts (via SH2 domain) with FGR. Associates with the SH2 and SH3 domains of LCK. Binding to he LCK SH3 domain occurs constitutively, while binding to the LCK SH2 domain occurs only upon TCR stimulation. A similar binding pattern was observed with LYN, but not with FYN in which the FYN SH2 region associates upon TCR stimulation but the FYN SH3 region does not associate regardless of TCR stimulation. Directly associates with HAX1, through binding to its C-terminal region. Interacts with HS1BP3. Interacts with FES/FPS. Forms a multiprotein complex with LYN and ANKRD54. In terms of processing, phosphorylated by LYN, FYN and FGR after cross-linking of surface IgM on B-cells. Phosphorylation by LYN, FYN and FGR requires prior phosphorylation by SYK. Binds to LCK in vivo, and is tyrosine phosphorylated upon TCR stimulation. Phosphorylated by FES. Expressed only in tissues and cells of hematopoietic origin.

Its subcellular location is the mitochondrion. In terms of biological role, substrate of the antigen receptor-coupled tyrosine kinase. Plays a role in antigen receptor signaling for both clonal expansion and deletion in lymphoid cells. May also be involved in the regulation of gene expression. The protein is Hematopoietic lineage cell-specific protein (Hcls1) of Mus musculus (Mouse).